A 368-amino-acid polypeptide reads, in one-letter code: Phosphoribosylformylglycinamidine cyclo-ligase (368 aa).

The protein belongs to the AIR synthase family.

It localises to the cytoplasm. It carries out the reaction 2-formamido-N(1)-(5-O-phospho-beta-D-ribosyl)acetamidine + ATP = 5-amino-1-(5-phospho-beta-D-ribosyl)imidazole + ADP + phosphate + H(+). The protein operates within purine metabolism; IMP biosynthesis via de novo pathway; 5-amino-1-(5-phospho-D-ribosyl)imidazole from N(2)-formyl-N(1)-(5-phospho-D-ribosyl)glycinamide: step 2/2. The chain is Phosphoribosylformylglycinamidine cyclo-ligase from Novosphingobium aromaticivorans (strain ATCC 700278 / DSM 12444 / CCUG 56034 / CIP 105152 / NBRC 16084 / F199).